Here is a 403-residue protein sequence, read N- to C-terminus: Na(+)-translocating NADH-quinone reductase subunit B (403 aa).

The next 3 helical transmembrane spans lie at 56 to 76 (IMIM…YNIG), 114 to 134 (LAMF…TFIV), and 165 to 185 (LPAT…VVIA). T231 is subject to FMN phosphoryl threonine. Transmembrane regions (helical) follow at residues 260–280 (GSVG…IIYM), 287–307 (IVLG…VIGS), 312–332 (MFAM…GMFF), 348–368 (WAYG…NPAF), and 371–391 (GMML…YFVA).

Belongs to the NqrB/RnfD family. Composed of six subunits; NqrA, NqrB, NqrC, NqrD, NqrE and NqrF. The cofactor is FMN.

Its subcellular location is the cell inner membrane. It carries out the reaction a ubiquinone + n Na(+)(in) + NADH + H(+) = a ubiquinol + n Na(+)(out) + NAD(+). Its function is as follows. NQR complex catalyzes the reduction of ubiquinone-1 to ubiquinol by two successive reactions, coupled with the transport of Na(+) ions from the cytoplasm to the periplasm. NqrA to NqrE are probably involved in the second step, the conversion of ubisemiquinone to ubiquinol. This Pseudoalteromonas atlantica (strain T6c / ATCC BAA-1087) protein is Na(+)-translocating NADH-quinone reductase subunit B.